Reading from the N-terminus, the 319-residue chain is tRNA-cytidine(32) 2-sulfurtransferase (319 aa).

Residues S43 to S48 carry the PP-loop motif motif. 3 residues coordinate [4Fe-4S] cluster: C118, C121, and C209.

This sequence belongs to the TtcA family. As to quaternary structure, homodimer. It depends on Mg(2+) as a cofactor. [4Fe-4S] cluster is required as a cofactor.

The protein localises to the cytoplasm. It catalyses the reaction cytidine(32) in tRNA + S-sulfanyl-L-cysteinyl-[cysteine desulfurase] + AH2 + ATP = 2-thiocytidine(32) in tRNA + L-cysteinyl-[cysteine desulfurase] + A + AMP + diphosphate + H(+). It participates in tRNA modification. In terms of biological role, catalyzes the ATP-dependent 2-thiolation of cytidine in position 32 of tRNA, to form 2-thiocytidine (s(2)C32). The sulfur atoms are provided by the cysteine/cysteine desulfurase (IscS) system. This Neisseria meningitidis serogroup C (strain 053442) protein is tRNA-cytidine(32) 2-sulfurtransferase.